A 124-amino-acid polypeptide reads, in one-letter code: Fluoride-specific ion channel FluC (124 aa).

Transmembrane regions (helical) follow at residues 4 to 24 (IFYI…TTLV), 35 to 55 (YATF…FGYL), 63 to 83 (PYLK…FSAF), and 96 to 116 (ILIA…ATWT). Positions 75 and 78 each coordinate Na(+).

It belongs to the fluoride channel Fluc/FEX (TC 1.A.43) family.

It localises to the cell inner membrane. The catalysed reaction is fluoride(in) = fluoride(out). With respect to regulation, na(+) is not transported, but it plays an essential structural role and its presence is essential for fluoride channel function. Functionally, fluoride-specific ion channel. Important for reducing fluoride concentration in the cell, thus reducing its toxicity. This is Fluoride-specific ion channel FluC from Flavobacterium psychrophilum (strain ATCC 49511 / DSM 21280 / CIP 103535 / JIP02/86).